A 237-amino-acid chain; its full sequence is Insulin-like growth factor-binding protein 6 (237 aa).

The first 25 residues, 1–25 (MTPHRLLPPLLLTLLLAARPGGALA), serve as a signal peptide directing secretion. Residues 26 to 105 (RCPGCGQGVS…LQGRGRCGRA (80 aa)) form the IGFBP N-terminal domain. 5 disulfides stabilise this stretch: cysteine 27/cysteine 30, cysteine 38/cysteine 42, cysteine 55/cysteine 61, cysteine 69/cysteine 82, and cysteine 76/cysteine 102. The tract at residues 101-158 (RCGRARTPSGENPKESKPQAGTARSQDVNRRDQQRNSGTSTTPSRSNSGGVQDTEMGP) is disordered. Over residues 135–151 (RNSGTSTTPSRSNSGGV) the composition is skewed to polar residues. Positions 156 to 231 (MGPCRKHLDS…SEGGDGSSLC (76 aa)) constitute a Thyroglobulin type-1 domain. 3 cysteine pairs are disulfide-bonded: cysteine 159-cysteine 186, cysteine 197-cysteine 208, and cysteine 210-cysteine 231. The interval 215–237 (GQPLPGSSEGGDGSSLCPTGSSG) is disordered.

Interacts (via C-terminal domain) with PHB2. Post-translationally, O-glycosylated.

Its subcellular location is the secreted. Its function is as follows. IGF-binding proteins prolong the half-life of the IGFs and have been shown to either inhibit or stimulate the growth promoting effects of the IGFs on cell culture. They alter the interaction of IGFs with their cell surface receptors. Activates the MAPK signaling pathway and induces cell migration. The chain is Insulin-like growth factor-binding protein 6 (IGFBP6) from Bos taurus (Bovine).